The following is a 401-amino-acid chain: Nicotinate phosphoribosyltransferase (401 aa).

Phosphohistidine; by autocatalysis is present on His-221.

Belongs to the NAPRTase family. In terms of processing, transiently phosphorylated on a His residue during the reaction cycle. Phosphorylation strongly increases the affinity for substrates and increases the rate of nicotinate D-ribonucleotide production. Dephosphorylation regenerates the low-affinity form of the enzyme, leading to product release.

It catalyses the reaction nicotinate + 5-phospho-alpha-D-ribose 1-diphosphate + ATP + H2O = nicotinate beta-D-ribonucleotide + ADP + phosphate + diphosphate. It participates in cofactor biosynthesis; NAD(+) biosynthesis; nicotinate D-ribonucleotide from nicotinate: step 1/1. Catalyzes the synthesis of beta-nicotinate D-ribonucleotide from nicotinate and 5-phospho-D-ribose 1-phosphate at the expense of ATP. The chain is Nicotinate phosphoribosyltransferase from Erwinia tasmaniensis (strain DSM 17950 / CFBP 7177 / CIP 109463 / NCPPB 4357 / Et1/99).